A 181-amino-acid polypeptide reads, in one-letter code: Large ribosomal subunit protein uL10 (181 aa).

This sequence belongs to the universal ribosomal protein uL10 family. Part of the ribosomal stalk of the 50S ribosomal subunit. The N-terminus interacts with L11 and the large rRNA to form the base of the stalk. The C-terminus forms an elongated spine to which L12 dimers bind in a sequential fashion forming a multimeric L10(L12)X complex.

In terms of biological role, forms part of the ribosomal stalk, playing a central role in the interaction of the ribosome with GTP-bound translation factors. This Trichormus variabilis (strain ATCC 29413 / PCC 7937) (Anabaena variabilis) protein is Large ribosomal subunit protein uL10.